We begin with the raw amino-acid sequence, 122 residues long: UPF0102 protein RHE_CH00320 (122 aa).

This sequence belongs to the UPF0102 family.

The polypeptide is UPF0102 protein RHE_CH00320 (Rhizobium etli (strain ATCC 51251 / DSM 11541 / JCM 21823 / NBRC 15573 / CFN 42)).